The following is a 248-amino-acid chain: MILFPAIDLKGGQCVRLKLGDMQQATVYNTDPAAQAKSFEDQGFEWLHVVDLDGAFAGHSANGDAVEAILKATKNPVQLGGGIRTLDHIEAWLSRGLRRVILGTVAVRNPELVIEACRKFPGRVAVGIDAKGGKVAVEGWAEASELGIIELAKKFEGAGVAAIIYTDIDRDGILTGINWSSTLELADAVSIPVIASGGLASLNDIKRMLQPDARKLEGAISGRALYDGRIDPKEALALINANRAKETA.

Aspartate 8 functions as the Proton acceptor in the catalytic mechanism. The Proton donor role is filled by aspartate 129.

It belongs to the HisA/HisF family.

The protein resides in the cytoplasm. It carries out the reaction 1-(5-phospho-beta-D-ribosyl)-5-[(5-phospho-beta-D-ribosylamino)methylideneamino]imidazole-4-carboxamide = 5-[(5-phospho-1-deoxy-D-ribulos-1-ylimino)methylamino]-1-(5-phospho-beta-D-ribosyl)imidazole-4-carboxamide. It functions in the pathway amino-acid biosynthesis; L-histidine biosynthesis; L-histidine from 5-phospho-alpha-D-ribose 1-diphosphate: step 4/9. The sequence is that of 1-(5-phosphoribosyl)-5-[(5-phosphoribosylamino)methylideneamino] imidazole-4-carboxamide isomerase from Rhizobium etli (strain ATCC 51251 / DSM 11541 / JCM 21823 / NBRC 15573 / CFN 42).